Consider the following 428-residue polypeptide: Kynureninase (428 aa).

Residues threonine 104, threonine 105, 132-135 (FPSD), aspartate 213, histidine 216, and tyrosine 238 contribute to the pyridoxal 5'-phosphate site. Lysine 239 carries the post-translational modification N6-(pyridoxal phosphate)lysine. Pyridoxal 5'-phosphate-binding residues include tryptophan 267 and threonine 295.

It belongs to the kynureninase family. As to quaternary structure, homodimer. Requires pyridoxal 5'-phosphate as cofactor.

It catalyses the reaction L-kynurenine + H2O = anthranilate + L-alanine + H(+). The catalysed reaction is 3-hydroxy-L-kynurenine + H2O = 3-hydroxyanthranilate + L-alanine + H(+). It functions in the pathway amino-acid degradation; L-kynurenine degradation; L-alanine and anthranilate from L-kynurenine: step 1/1. Its pathway is cofactor biosynthesis; NAD(+) biosynthesis; quinolinate from L-kynurenine: step 2/3. In terms of biological role, catalyzes the cleavage of L-kynurenine (L-Kyn) and L-3-hydroxykynurenine (L-3OHKyn) into anthranilic acid (AA) and 3-hydroxyanthranilic acid (3-OHAA), respectively. The chain is Kynureninase from Bacillus mycoides (strain KBAB4) (Bacillus weihenstephanensis).